A 299-amino-acid polypeptide reads, in one-letter code: Transcription factor BHLH148 (299 aa).

Positions 90 to 127 (RMGGGGGGGEKGEGEEMEEEEEVPQRRRRGQGADVESS) are disordered. Residues 102–111 (EGEEMEEEEE) show a composition bias toward acidic residues. A basic motif; degenerate region spans residues 127–140 (SRGFRHMMRERQRR). Residues 127-176 (SRGFRHMMRERQRREKLSQSYADLYAMVSSRSKGDKNSIVQSAAIYIHEL) enclose the bHLH domain. The interval 141–176 (EKLSQSYADLYAMVSSRSKGDKNSIVQSAAIYIHEL) is helix-loop-helix motif. Positions 273 to 299 (ERNQPDSDAPFPGSKGWTQTSHVQNVF) are disordered. Positions 288-299 (GWTQTSHVQNVF) are enriched in polar residues.

It belongs to the bHLH protein family. As to quaternary structure, interacts with TIFY10A/JAZ6, TIFY10B/JAZ7, TIFY11A/JAZ9, TIFY11C/JAZ11, and TIFY11D/JAZ12.

Its subcellular location is the nucleus. Functionally, may act on an initial response of jasmonate-regulated gene expression toward drought tolerance as part of a BHLH148-TIFY11D/JAZ12-COI1A complex. This chain is Transcription factor BHLH148, found in Oryza sativa subsp. japonica (Rice).